Reading from the N-terminus, the 496-residue chain is MAVKNIVAVDLGASSGRVMLATLHTATQHLTLKEIHRFSNTLVFQDNHHQWDLAALERDILTGLHQIDAMGIVPDSIGIDSWGVDYVLLDQDGQRVGLPYSYRDHRTDGVMATVTAELGREAIYQRTGIQFLPFNTLYQLKALCDAPSDDLHQVAHLLMIPDYFHYRLTGSLVCEYTNASTTQLLSLEKKTWDSELLDYLGVPRRWLSDPVQPGHAVGKWAAPSGRQISVTAVATHDTASAVVGAPLQSRDSAYLSSGTWSLMGIESDTPFNSPQALAANITNEGGVDGTYRVLKNIMGLWLLQRVCQERDIKDLGALIEAAAALPAFASLINPNDDRFINPPSMHQAIRDYCREHGQPVPHSDAELARCIFDSLALLYRQVVLELGELRHAPIRQLHIVGGGSQNAFLNQLCADVCQIPVLAGPVEASTLGNIGCQLMALGAVADLAAFRHMLTHNFPLHRYTPRAESDFAGHWRRFQALSQPETAPKGKKETTQ.

ATP is bound at residue A13–R17. Residues G83 and H236–T238 each bind substrate. Catalysis depends on D237, which acts as the Proton acceptor. T259 lines the ATP pocket. N296 serves as a coordination point for substrate. Q304 is an ATP binding site. C353 and C370 are joined by a disulfide. G402 contributes to the ATP binding site. C413 and C417 are disulfide-bonded.

The protein belongs to the rhamnulokinase family. The cofactor is Mg(2+).

It carries out the reaction L-rhamnulose + ATP = L-rhamnulose 1-phosphate + ADP + H(+). It participates in carbohydrate degradation; L-rhamnose degradation; glycerone phosphate from L-rhamnose: step 2/3. Involved in the catabolism of L-rhamnose (6-deoxy-L-mannose). Catalyzes the transfer of the gamma-phosphate group from ATP to the 1-hydroxyl group of L-rhamnulose to yield L-rhamnulose 1-phosphate. This is Rhamnulokinase from Pectobacterium carotovorum subsp. carotovorum (strain PC1).